A 366-amino-acid chain; its full sequence is Putative [LysW]-aminoadipate semialdehyde/glutamate semialdehyde transaminase (366 aa).

Pyridoxal 5'-phosphate is bound by residues 90–91 and phenylalanine 117; that span reads GT. Arginine 120 is a substrate binding site. Residue 202 to 205 participates in pyridoxal 5'-phosphate binding; the sequence is DEVQ. The residue at position 230 (lysine 230) is an N6-(pyridoxal phosphate)lysine. Serine 254 is a binding site for substrate. Residue threonine 255 coordinates pyridoxal 5'-phosphate.

Belongs to the class-III pyridoxal-phosphate-dependent aminotransferase family. LysJ subfamily. In terms of assembly, homodimer. Pyridoxal 5'-phosphate serves as cofactor.

It localises to the cytoplasm. It catalyses the reaction [amino-group carrier protein]-C-terminal-gamma-(L-lysyl)-L-glutamate + 2-oxoglutarate = [amino-group carrier protein]-C-terminal-N-(1-carboxy-5-oxopentan-1-yl)-L-glutamine + L-glutamate. It carries out the reaction [amino-group carrier protein]-C-terminal-gamma-(L-ornithyl)-L-glutamate + 2-oxoglutarate = [amino-group carrier protein]-C-terminal-gamma-(L-glutamyl-5-semialdehyde)-L-glutamate + L-glutamate. It participates in amino-acid biosynthesis; L-lysine biosynthesis via AAA pathway; L-lysine from L-alpha-aminoadipate (Thermus route): step 4/5. Its pathway is amino-acid biosynthesis; L-arginine biosynthesis. Its function is as follows. Involved in both the arginine and lysine biosynthetic pathways. This Pyrococcus horikoshii (strain ATCC 700860 / DSM 12428 / JCM 9974 / NBRC 100139 / OT-3) protein is Putative [LysW]-aminoadipate semialdehyde/glutamate semialdehyde transaminase.